A 428-amino-acid chain; its full sequence is Serine--tRNA ligase (428 aa).

Position 235–237 (235–237 (TAE)) interacts with L-serine. Residue 266-268 (RSE) coordinates ATP. Residue glutamate 289 participates in L-serine binding. 353–356 (EISS) is an ATP binding site. Position 389 (serine 389) interacts with L-serine.

It belongs to the class-II aminoacyl-tRNA synthetase family. Type-1 seryl-tRNA synthetase subfamily. In terms of assembly, homodimer. The tRNA molecule binds across the dimer.

It is found in the cytoplasm. The catalysed reaction is tRNA(Ser) + L-serine + ATP = L-seryl-tRNA(Ser) + AMP + diphosphate + H(+). The enzyme catalyses tRNA(Sec) + L-serine + ATP = L-seryl-tRNA(Sec) + AMP + diphosphate + H(+). The protein operates within aminoacyl-tRNA biosynthesis; selenocysteinyl-tRNA(Sec) biosynthesis; L-seryl-tRNA(Sec) from L-serine and tRNA(Sec): step 1/1. Catalyzes the attachment of serine to tRNA(Ser). Is also able to aminoacylate tRNA(Sec) with serine, to form the misacylated tRNA L-seryl-tRNA(Sec), which will be further converted into selenocysteinyl-tRNA(Sec). The protein is Serine--tRNA ligase of Shewanella denitrificans (strain OS217 / ATCC BAA-1090 / DSM 15013).